A 617-amino-acid polypeptide reads, in one-letter code: Ceramide transfer protein (617 aa).

Polar residues predominate over residues 1-11 (MSDNQSWNSSG). The disordered stretch occupies residues 1 to 23 (MSDNQSWNSSGSEEDLETESGPP). A PH domain is found at 23–117 (PVERCGVLSK…WIDSIEQHKS (95 aa)). Positions 268–302 (REDSWQKRLDKEIEKRRRVEEAYKNAMTELKKKSH) form a coiled coil. Residues 320–326 (EFFDAVE) carry the FFAT motif. The segment covering 332–344 (QDKIEQSQSEKGR) has biased composition (basic and acidic residues). Positions 332-355 (QDKIEQSQSEKGRSHWPSSLPSTE) are disordered. An START domain is found at 383–611 (DEHRFRIQVE…FTSYVQEKTA (229 aa)). Residues E466, Q487, N524, and Y572 each coordinate an N-acylsphing-4-enine.

The protein localises to the cytoplasm. It is found in the golgi apparatus. The protein resides in the endoplasmic reticulum. The enzyme catalyses N-hexadecanoylsphing-4-enine(in) = N-hexadecanoylsphing-4-enine(out). In terms of biological role, may mediate the intracellular trafficking of ceramide in a non-vesicular manner. This chain is Ceramide transfer protein (cert1), found in Xenopus tropicalis (Western clawed frog).